A 700-amino-acid polypeptide reads, in one-letter code: Elongation factor G (700 aa).

A tr-type G domain is found at 8–290; it reads ERYRNIGISA…AVVEYLPAPT (283 aa). Residues 17 to 24, 88 to 92, and 142 to 145 contribute to the GTP site; these read AHIDAGKT, DTPGH, and NKMD.

The protein belongs to the TRAFAC class translation factor GTPase superfamily. Classic translation factor GTPase family. EF-G/EF-2 subfamily.

It localises to the cytoplasm. In terms of biological role, catalyzes the GTP-dependent ribosomal translocation step during translation elongation. During this step, the ribosome changes from the pre-translocational (PRE) to the post-translocational (POST) state as the newly formed A-site-bound peptidyl-tRNA and P-site-bound deacylated tRNA move to the P and E sites, respectively. Catalyzes the coordinated movement of the two tRNA molecules, the mRNA and conformational changes in the ribosome. This chain is Elongation factor G, found in Haemophilus influenzae (strain 86-028NP).